Here is a 397-residue protein sequence, read N- to C-terminus: Iripin-2 (397 aa).

A signal peptide spans Met-1–Ala-21. N-linked (GlcNAc...) asparagine glycans are attached at residues Asn-109 and Asn-270.

The protein belongs to the serpin family. Interacts with mouse MCPT4. Female salivary gland. Ovary. Midgut.

The protein localises to the secreted. Functionally, serine protease inhibitor that modulates blood feeding of ticks on vertebrate species. Inhibits host trypsin, thrombin (F2), alpha-chymotrypsin, cathepsin G (CTSG) and mast cell chymase (CMA1). Inhibits host cathepsin G- and thrombin-induced platelet aggregation. Inhibits acute inflammation in the host. Suppresses neutrophil recruitment in inflamed area. Does not inhibit host plasmin (PLG), factor Xa (F10), factor XIa (F11), elastase and proteinase 3/myeloblastin (PRTN3). (Microbial infection) Inhibits IL6 production by mouse splenic dendritic cells in response to Borrelia burgdorferi exposure. Decreases levels of STAT3 phosphorylation in mouse splenic dendritic cells in response to Borrelia burgdorferi exposure and in Borrelia-primed CD4+ T-lymphocytes. Inhibits differentiation of mouse Th17 cells, a subset of CD4+ T-lymphocytes that play a crucial role in protection against extracellular bacteria, in response to Borrelia burgdorferi exposure via inhibition of the IL6/STAT3 signaling pathway. In Ixodes ricinus (Common tick), this protein is Iripin-2.